Here is a 291-residue protein sequence, read N- to C-terminus: Acetyl-coenzyme A carboxylase carboxyl transferase subunit beta (291 aa).

The 256-residue stretch at M36–N291 folds into the CoA carboxyltransferase N-terminal domain. Positions 40, 43, 59, and 62 each coordinate Zn(2+). The C4-type zinc-finger motif lies at C40 to C62.

It belongs to the AccD/PCCB family. In terms of assembly, acetyl-CoA carboxylase is a heterohexamer composed of biotin carboxyl carrier protein (AccB), biotin carboxylase (AccC) and two subunits each of ACCase subunit alpha (AccA) and ACCase subunit beta (AccD). Zn(2+) is required as a cofactor.

Its subcellular location is the cytoplasm. The enzyme catalyses N(6)-carboxybiotinyl-L-lysyl-[protein] + acetyl-CoA = N(6)-biotinyl-L-lysyl-[protein] + malonyl-CoA. The protein operates within lipid metabolism; malonyl-CoA biosynthesis; malonyl-CoA from acetyl-CoA: step 1/1. Its function is as follows. Component of the acetyl coenzyme A carboxylase (ACC) complex. Biotin carboxylase (BC) catalyzes the carboxylation of biotin on its carrier protein (BCCP) and then the CO(2) group is transferred by the transcarboxylase to acetyl-CoA to form malonyl-CoA. This is Acetyl-coenzyme A carboxylase carboxyl transferase subunit beta from Clostridium kluyveri (strain NBRC 12016).